The sequence spans 358 residues: UDP-N-acetylglucosamine--N-acetylmuramyl-(pentapeptide) pyrophosphoryl-undecaprenol N-acetylglucosamine transferase (358 aa).

UDP-N-acetyl-alpha-D-glucosamine-binding positions include 11–13 (TGG), Arg163, Ser191, Ile245, and Gln290.

This sequence belongs to the glycosyltransferase 28 family. MurG subfamily.

It is found in the cell inner membrane. The enzyme catalyses di-trans,octa-cis-undecaprenyl diphospho-N-acetyl-alpha-D-muramoyl-L-alanyl-D-glutamyl-meso-2,6-diaminopimeloyl-D-alanyl-D-alanine + UDP-N-acetyl-alpha-D-glucosamine = di-trans,octa-cis-undecaprenyl diphospho-[N-acetyl-alpha-D-glucosaminyl-(1-&gt;4)]-N-acetyl-alpha-D-muramoyl-L-alanyl-D-glutamyl-meso-2,6-diaminopimeloyl-D-alanyl-D-alanine + UDP + H(+). It functions in the pathway cell wall biogenesis; peptidoglycan biosynthesis. In terms of biological role, cell wall formation. Catalyzes the transfer of a GlcNAc subunit on undecaprenyl-pyrophosphoryl-MurNAc-pentapeptide (lipid intermediate I) to form undecaprenyl-pyrophosphoryl-MurNAc-(pentapeptide)GlcNAc (lipid intermediate II). In Herminiimonas arsenicoxydans, this protein is UDP-N-acetylglucosamine--N-acetylmuramyl-(pentapeptide) pyrophosphoryl-undecaprenol N-acetylglucosamine transferase.